A 787-amino-acid chain; its full sequence is Signal transducer and activator of transcription 5B (787 aa).

Phosphotyrosine is present on Tyr-90. 2 positions are modified to phosphoserine: Ser-128 and Ser-193. Residues 232–321 (KHQKTLQLLR…MLAEVNATIT (90 aa)) form a required for interaction with NMI region. The region spanning 589 to 686 (WNDGAILGFV…EVYSKYYTPV (98 aa)) is the SH2 domain. Phosphotyrosine is present on Tyr-682. At Tyr-699 the chain carries Phosphotyrosine; by HCK, JAK and PTK6.

The protein belongs to the transcription factor STAT family. As to quaternary structure, upon activation, forms homodimers. Forms also heterodimers with related family members. Binds NR3C1. Interacts with NCOA1. Interacts with NMI. Interacts with SOCS7. Interacts (via SH2 domain) with INSR. Interacts with CPEB3; this inhibits STAT5B-mediated transcriptional activation. Post-translationally, tyrosine phosphorylated in response to signaling via activated KIT, resulting in translocation to the nucleus. Tyrosine phosphorylated in response to signaling via activated FLT3; wild-type FLT3 results in much weaker phosphorylation than constitutively activated mutant FLT3. Alternatively, can be phosphorylated by JAK2. Phosphorylation at Tyr-699 by PTK6 or HCK leads to an increase of its transcriptional activity.

It localises to the cytoplasm. Its subcellular location is the nucleus. In terms of biological role, carries out a dual function: signal transduction and activation of transcription. Mediates cellular responses to the cytokine KITLG/SCF and other growth factors. Binds to the GAS element and activates PRL-induced transcription. Positively regulates hematopoietic/erythroid differentiation. In Homo sapiens (Human), this protein is Signal transducer and activator of transcription 5B (STAT5B).